We begin with the raw amino-acid sequence, 244 residues long: UDP-2,3-diacylglucosamine hydrolase (244 aa).

Mn(2+) contacts are provided by Asp8, His10, Asp41, Asn79, and His114. A substrate-binding site is contributed by Asn79–Arg80. The substrate site is built by Asp122, Ser160, Asn164, Lys167, and His195. Residues His195 and His197 each coordinate Mn(2+).

Belongs to the LpxH family. The cofactor is Mn(2+).

The protein localises to the cell inner membrane. The catalysed reaction is UDP-2-N,3-O-bis[(3R)-3-hydroxytetradecanoyl]-alpha-D-glucosamine + H2O = 2-N,3-O-bis[(3R)-3-hydroxytetradecanoyl]-alpha-D-glucosaminyl 1-phosphate + UMP + 2 H(+). Its pathway is glycolipid biosynthesis; lipid IV(A) biosynthesis; lipid IV(A) from (3R)-3-hydroxytetradecanoyl-[acyl-carrier-protein] and UDP-N-acetyl-alpha-D-glucosamine: step 4/6. Functionally, hydrolyzes the pyrophosphate bond of UDP-2,3-diacylglucosamine to yield 2,3-diacylglucosamine 1-phosphate (lipid X) and UMP by catalyzing the attack of water at the alpha-P atom. Involved in the biosynthesis of lipid A, a phosphorylated glycolipid that anchors the lipopolysaccharide to the outer membrane of the cell. The chain is UDP-2,3-diacylglucosamine hydrolase from Hahella chejuensis (strain KCTC 2396).